Reading from the N-terminus, the 105-residue chain is Nitrogenase-stabilizing/protective protein NifW (105 aa).

The protein belongs to the NifW family. As to quaternary structure, homotrimer; associates with NifD.

Functionally, may protect the nitrogenase Fe-Mo protein from oxidative damage. This chain is Nitrogenase-stabilizing/protective protein NifW, found in Rhodospirillum centenum (strain ATCC 51521 / SW).